The sequence spans 145 residues: Large ribosomal subunit protein uL24 (145 aa).

The tract at residues 108–145 (EPIQEEQQKTEETKQEIAPEEVEAKEAQDKQEVKENDQ) is disordered. The segment covering 113-145 (EQQKTEETKQEIAPEEVEAKEAQDKQEVKENDQ) has biased composition (basic and acidic residues).

It belongs to the universal ribosomal protein uL24 family. In terms of assembly, part of the 50S ribosomal subunit.

One of two assembly initiator proteins, it binds directly to the 5'-end of the 23S rRNA, where it nucleates assembly of the 50S subunit. Its function is as follows. Located at the polypeptide exit tunnel on the outside of the subunit. The chain is Large ribosomal subunit protein uL24 (rpl24) from Thermoplasma volcanium (strain ATCC 51530 / DSM 4299 / JCM 9571 / NBRC 15438 / GSS1).